The sequence spans 175 residues: ATP synthase subunit delta (175 aa).

The protein belongs to the ATPase delta chain family. As to quaternary structure, F-type ATPases have 2 components, F(1) - the catalytic core - and F(0) - the membrane proton channel. F(1) has five subunits: alpha(3), beta(3), gamma(1), delta(1), epsilon(1). F(0) has three main subunits: a(1), b(2) and c(10-14). The alpha and beta chains form an alternating ring which encloses part of the gamma chain. F(1) is attached to F(0) by a central stalk formed by the gamma and epsilon chains, while a peripheral stalk is formed by the delta and b chains.

It is found in the cell inner membrane. In terms of biological role, f(1)F(0) ATP synthase produces ATP from ADP in the presence of a proton or sodium gradient. F-type ATPases consist of two structural domains, F(1) containing the extramembraneous catalytic core and F(0) containing the membrane proton channel, linked together by a central stalk and a peripheral stalk. During catalysis, ATP synthesis in the catalytic domain of F(1) is coupled via a rotary mechanism of the central stalk subunits to proton translocation. This protein is part of the stalk that links CF(0) to CF(1). It either transmits conformational changes from CF(0) to CF(1) or is implicated in proton conduction. This Xanthomonas euvesicatoria pv. vesicatoria (strain 85-10) (Xanthomonas campestris pv. vesicatoria) protein is ATP synthase subunit delta.